Reading from the N-terminus, the 174-residue chain is 2-C-methyl-D-erythritol 2,4-cyclodiphosphate synthase (174 aa).

The a divalent metal cation site is built by aspartate 13, histidine 15, and histidine 61. Residue 13-15 (DAH) coordinates 4-CDP-2-C-methyl-D-erythritol 2-phosphate. Residues 75 to 77 (DIG), 149 to 152 (TTTD), phenylalanine 156, and histidine 159 contribute to the 4-CDP-2-C-methyl-D-erythritol 2-phosphate site.

It belongs to the IspF family. Homotrimer. A divalent metal cation is required as a cofactor.

It carries out the reaction 4-CDP-2-C-methyl-D-erythritol 2-phosphate = 2-C-methyl-D-erythritol 2,4-cyclic diphosphate + CMP. Its pathway is isoprenoid biosynthesis; isopentenyl diphosphate biosynthesis via DXP pathway; isopentenyl diphosphate from 1-deoxy-D-xylulose 5-phosphate: step 4/6. Functionally, involved in the biosynthesis of isopentenyl diphosphate (IPP) and dimethylallyl diphosphate (DMAPP), two major building blocks of isoprenoid compounds. Catalyzes the conversion of 4-diphosphocytidyl-2-C-methyl-D-erythritol 2-phosphate (CDP-ME2P) to 2-C-methyl-D-erythritol 2,4-cyclodiphosphate (ME-CPP) with a corresponding release of cytidine 5-monophosphate (CMP). The chain is 2-C-methyl-D-erythritol 2,4-cyclodiphosphate synthase from Bifidobacterium longum (strain NCC 2705).